Reading from the N-terminus, the 210-residue chain is NAD(P)H-quinone oxidoreductase subunit I (210 aa).

4Fe-4S ferredoxin-type domains are found at residues 54–83 (GRIHFEFDKCIACEICVRVCPIDLPVVDWA) and 94–123 (YSYSIDFGVCIFCANCVEFCPTNCLSVTED). Residues cysteine 63, cysteine 66, cysteine 69, cysteine 73, cysteine 103, cysteine 106, cysteine 109, and cysteine 113 each coordinate [4Fe-4S] cluster.

This sequence belongs to the complex I 23 kDa subunit family. In terms of assembly, NDH-1 is composed of at least 11 different subunits. [4Fe-4S] cluster is required as a cofactor.

The protein localises to the cellular thylakoid membrane. It carries out the reaction a plastoquinone + NADH + (n+1) H(+)(in) = a plastoquinol + NAD(+) + n H(+)(out). The catalysed reaction is a plastoquinone + NADPH + (n+1) H(+)(in) = a plastoquinol + NADP(+) + n H(+)(out). In terms of biological role, NDH-1 shuttles electrons from an unknown electron donor, via FMN and iron-sulfur (Fe-S) centers, to quinones in the respiratory and/or the photosynthetic chain. The immediate electron acceptor for the enzyme in this species is believed to be plastoquinone. Couples the redox reaction to proton translocation, and thus conserves the redox energy in a proton gradient. The protein is NAD(P)H-quinone oxidoreductase subunit I of Synechococcus sp. (strain JA-2-3B'a(2-13)) (Cyanobacteria bacterium Yellowstone B-Prime).